The sequence spans 704 residues: Elongation factor G (704 aa).

Residues 8–290 (EKYRNIGICA…GVVRYLPAPN (283 aa)) enclose the tr-type G domain. GTP contacts are provided by residues 17-24 (AHVDAGKT), 88-92 (DTPGH), and 142-145 (NKMD).

Belongs to the TRAFAC class translation factor GTPase superfamily. Classic translation factor GTPase family. EF-G/EF-2 subfamily.

The protein localises to the cytoplasm. Catalyzes the GTP-dependent ribosomal translocation step during translation elongation. During this step, the ribosome changes from the pre-translocational (PRE) to the post-translocational (POST) state as the newly formed A-site-bound peptidyl-tRNA and P-site-bound deacylated tRNA move to the P and E sites, respectively. Catalyzes the coordinated movement of the two tRNA molecules, the mRNA and conformational changes in the ribosome. The polypeptide is Elongation factor G (Francisella tularensis subsp. holarctica (strain FTNF002-00 / FTA)).